The primary structure comprises 224 residues: MQTWKDVIGTEKTQPYFQHILQQVHAARDAGKTIYPPQHDVFNAFKLTEFDQVKVVILGQDPYHGPNQAHGLAFSVLPGIVPPPSLLNIYKELENDIAGFQIPRHGYLVKWAEQGVLLLNTVLTVERGLAHSHANFGWETFTDRVIAALNRHRENLVFLLWGSHAQKKGQFIDRDRHCVLTAPHPSPLSAHRGFLGCHHFSKANNYLQEHKITEIDWQLDTQLS.

Aspartate 61 functions as the Proton acceptor in the catalytic mechanism.

It belongs to the uracil-DNA glycosylase (UDG) superfamily. UNG family.

The protein resides in the cytoplasm. It catalyses the reaction Hydrolyzes single-stranded DNA or mismatched double-stranded DNA and polynucleotides, releasing free uracil.. Its function is as follows. Excises uracil residues from the DNA which can arise as a result of misincorporation of dUMP residues by DNA polymerase or due to deamination of cytosine. This chain is Uracil-DNA glycosylase, found in Mannheimia succiniciproducens (strain KCTC 0769BP / MBEL55E).